The sequence spans 61 residues: Metallothionein-1F (61 aa).

N-acetylmethionine is present on methionine 1. The tract at residues 1–29 (MDPNCSCPTGGSCTCAGSCTCKACRCTSC) is beta. The a divalent metal cation site is built by cysteine 5, cysteine 7, cysteine 13, cysteine 15, cysteine 19, cysteine 21, cysteine 24, cysteine 26, cysteine 29, cysteine 33, cysteine 34, cysteine 36, cysteine 37, cysteine 41, cysteine 44, cysteine 48, cysteine 50, and cysteine 57. The tract at residues 30–61 (KKSCCSCCPAGCAKCAQGCICKGASDKCSCCA) is alpha. Phosphoserine is present on serine 58. Positions 59 and 60 each coordinate a divalent metal cation.

It belongs to the metallothionein superfamily. Type 1 family. As to quaternary structure, monomer.

Functionally, metallothioneins have a high content of cysteine residues that bind various heavy metals; these proteins are transcriptionally regulated by both heavy metals and glucocorticoids. In Sus scrofa (Pig), this protein is Metallothionein-1F (MT1F).